Reading from the N-terminus, the 56-residue chain is uncharacterized protein (56 aa).

This is an uncharacterized protein from Orgyia pseudotsugata (Douglas-fir tussock moth).